A 176-amino-acid chain; its full sequence is Peptide deformylase 1 (176 aa).

Residues Cys-99 and His-141 each contribute to the Fe cation site. Glu-142 is a catalytic residue. Residue His-145 participates in Fe cation binding.

This sequence belongs to the polypeptide deformylase family. It depends on Fe(2+) as a cofactor.

It carries out the reaction N-terminal N-formyl-L-methionyl-[peptide] + H2O = N-terminal L-methionyl-[peptide] + formate. Its function is as follows. Removes the formyl group from the N-terminal Met of newly synthesized proteins. Requires at least a dipeptide for an efficient rate of reaction. N-terminal L-methionine is a prerequisite for activity but the enzyme has broad specificity at other positions. The sequence is that of Peptide deformylase 1 from Bordetella pertussis (strain Tohama I / ATCC BAA-589 / NCTC 13251).